The chain runs to 413 residues: Protein trichome birefringence-like 31 (413 aa).

The chain crosses the membrane as a helical; Signal-anchor for type II membrane protein span at residues 12-34; that stretch reads IQSIFQVVLVSLLVLGSVRWILD. Positions 141–143 match the GDS motif motif; the sequence is GDS. The DCXHWCLPGXXDXWN motif signature appears at 384–398; sequence DCIHWCLPGVPDTWN.

This sequence belongs to the PC-esterase family. TBL subfamily.

The protein localises to the membrane. Its function is as follows. May act as a bridging protein that binds pectin and other cell wall polysaccharides. Probably involved in maintaining esterification of pectins. May be involved in the specific O-acetylation of cell wall polymers. This Arabidopsis thaliana (Mouse-ear cress) protein is Protein trichome birefringence-like 31 (TBL31).